A 464-amino-acid polypeptide reads, in one-letter code: Siroheme synthase (464 aa).

The interval 1 to 203 (MEFLPLFHNL…GQGDEAERLL (203 aa)) is precorrin-2 dehydrogenase /sirohydrochlorin ferrochelatase. NAD(+)-binding positions include 22–23 (EI) and 43–44 (PQ). A Phosphoserine modification is found at serine 128. The segment at 216 to 464 (GEVYLVGAGP…KWFEGAQSQV (249 aa)) is uroporphyrinogen-III C-methyltransferase. Proline 225 contributes to the S-adenosyl-L-methionine binding site. Catalysis depends on aspartate 248, which acts as the Proton acceptor. Residue lysine 270 is the Proton donor of the active site. S-adenosyl-L-methionine is bound by residues 301 to 303 (GGD), isoleucine 306, 331 to 332 (TA), methionine 383, and glycine 412.

The protein in the N-terminal section; belongs to the precorrin-2 dehydrogenase / sirohydrochlorin ferrochelatase family. In the C-terminal section; belongs to the precorrin methyltransferase family.

The catalysed reaction is uroporphyrinogen III + 2 S-adenosyl-L-methionine = precorrin-2 + 2 S-adenosyl-L-homocysteine + H(+). It carries out the reaction precorrin-2 + NAD(+) = sirohydrochlorin + NADH + 2 H(+). The enzyme catalyses siroheme + 2 H(+) = sirohydrochlorin + Fe(2+). Its pathway is cofactor biosynthesis; adenosylcobalamin biosynthesis; precorrin-2 from uroporphyrinogen III: step 1/1. It functions in the pathway cofactor biosynthesis; adenosylcobalamin biosynthesis; sirohydrochlorin from precorrin-2: step 1/1. It participates in porphyrin-containing compound metabolism; siroheme biosynthesis; precorrin-2 from uroporphyrinogen III: step 1/1. The protein operates within porphyrin-containing compound metabolism; siroheme biosynthesis; siroheme from sirohydrochlorin: step 1/1. Its pathway is porphyrin-containing compound metabolism; siroheme biosynthesis; sirohydrochlorin from precorrin-2: step 1/1. Functionally, multifunctional enzyme that catalyzes the SAM-dependent methylations of uroporphyrinogen III at position C-2 and C-7 to form precorrin-2 via precorrin-1. Then it catalyzes the NAD-dependent ring dehydrogenation of precorrin-2 to yield sirohydrochlorin. Finally, it catalyzes the ferrochelation of sirohydrochlorin to yield siroheme. This chain is Siroheme synthase, found in Pseudomonas fluorescens (strain SBW25).